A 135-amino-acid polypeptide reads, in one-letter code: 30 kDa antigenic glycoprotein (135 aa).

The first 5 residues, 1-5 (GNTYS), serve as a signal peptide directing secretion. Asparagine 22, asparagine 31, asparagine 57, and asparagine 73 each carry an N-linked (GlcNAc...) asparagine glycan.

To H.contortus 15 kDa excretory/secretory protein.

It is found in the secreted. This Trichostrongylus colubriformis (Black scour worm) protein is 30 kDa antigenic glycoprotein.